A 550-amino-acid polypeptide reads, in one-letter code: Chaperonin GroEL (550 aa).

Residues 30–33, Lys51, 87–91, Gly415, and Asp497 each bind ATP; these read TLGP and DGTTT.

It belongs to the chaperonin (HSP60) family. In terms of assembly, forms a cylinder of 14 subunits composed of two heptameric rings stacked back-to-back. Interacts with the co-chaperonin GroES.

It is found in the cytoplasm. The enzyme catalyses ATP + H2O + a folded polypeptide = ADP + phosphate + an unfolded polypeptide.. In terms of biological role, together with its co-chaperonin GroES, plays an essential role in assisting protein folding. The GroEL-GroES system forms a nano-cage that allows encapsulation of the non-native substrate proteins and provides a physical environment optimized to promote and accelerate protein folding. This Yersinia enterocolitica protein is Chaperonin GroEL.